Here is a 591-residue protein sequence, read N- to C-terminus: MKNSRTWAWRAPVELFLLCAALGCLSLPGSRGERPHSFGSNAVNKSFAKSRQMRSVDVTLMPIDCELSSWSSWTTCDPCQKKRYRYAYLLQPSQFHGEPCNFSDKEVEDCVTNRPCGSQVRCEGFVCAQTGRCVNRRLLCNGDNDCGDQSDEANCRRIYKKCQHEMDQYWGIGSLASGINLFTNSFEGPVLDHRYYAGGCSPHYILNTRFRKPYNVESYTPQTQGKYEFILKEYESYSDFERNVTEKMASKSGFSFGFKIPGIFELGISSQSDRGKHYIRRTKRFSHTKSVFLHARSDLEVAHYKLKPRSLMLHYEFLQRVKRLPLEYSYGEYRDLFRDFGTHYITEAVLGGIYEYTLVMNKEAMERGDYTLNNVHACAKNDFKIGGAIEEVYVSLGVSVGKCRGILNEIKDRNKRDTMVEDLVVLVRGGASEHITTLAYQELPTADLMQEWGDAVQYNPAIIKVKVEPLYELVTATDFAYSSTVRQNMKQALEEFQKEVSSCHCAPCQGNGVPVLKGSRCDCICPVGSQGLACEVSYRKNTPIDGKWNCWSNWSSCSGRRKTRQRQCNNPPPQNGGSPCSGPASETLDCS.

Positions 1–32 are cleaved as a signal peptide; the sequence is MKNSRTWAWRAPVELFLLCAALGCLSLPGSRG. A propeptide spanning residues 33–54 is cleaved from the precursor; the sequence is ERPHSFGSNAVNKSFAKSRQMR. The TSP type-1 1 domain occupies 64 to 117; it reads DCELSSWSSWTTCDPCQKKRYRYAYLLQPSQFHGEPCNFSDKEVEDCVTNRPCG. Intrachain disulfides connect C65-C100, C76-C110, C79-C116, C122-C133, C127-C146, C140-C155, and C162-C200. W70 and W73 each carry a C-linked (Man) tryptophan glycan. An N-linked (GlcNAc...) asparagine glycan is attached at N101. An LDL-receptor class A domain is found at 120–157; the sequence is VRCEGFVCAQTGRCVNRRLLCNGDNDCGDQSDEANCRR. Ca(2+)-binding residues include L138, N141, D143, D145, D151, and E152. The 347-residue stretch at 158-504 folds into the MACPF domain; that stretch reads IYKKCQHEMD…EFQKEVSSCH (347 aa). An N-linked (GlcNAc...) asparagine glycan is attached at N243. 4 consecutive transmembrane segments (beta stranded) span residues 252–259, 262–269, 379–386, and 392–399; these read SGFSFGFK, GIFELGIS, AKNDFKIG, and VYVSLGVS. A disulfide bridge connects residues C378 and C403. T418 is subject to Phosphothreonine. 4 disulfide bridges follow: C503–C550, C505–C521, C508–C523, and C525–C534. Positions 505-535 constitute an EGF-like domain; it reads CAPCQGNGVPVLKGSRCDCICPVGSQGLACE. A TSP type-1 2 domain is found at 545 to 591; that stretch reads DGKWNCWSNWSSCSGRRKTRQRQCNNPPPQNGGSPCSGPASETLDCS. 2 C-linked (Man) tryptophan glycosylation sites follow: W551 and W554. Residues C557 and C590 are joined by a disulfide bond. Residues 568–591 form a disordered region; the sequence is CNNPPPQNGGSPCSGPASETLDCS.

This sequence belongs to the complement C6/C7/C8/C9 family. Heterotrimer of 3 chains: alpha (C8A), beta (C8B) and gamma (C8G); the alpha and gamma chains are disulfide bonded. Component of the membrane attack complex (MAC), composed of complement C5b, C6, C7, C8A, C8B, C8G and multiple copies of the pore-forming subunit C9. In terms of processing, N-glycosylated; contains one or two bound glycans. Not O-glycosylated.

The protein localises to the secreted. It is found in the target cell membrane. With respect to regulation, membrane attack complex (MAC) assembly is inhibited by CD59, thereby protecting self-cells from damage during complement activation. CD59 acts by binding to the beta-haipins of C8 (C8A and C8B), forming an intermolecular beta-sheet that prevents incorporation of the multiple copies of C9 required for complete formation of the osmolytic pore. MAC assembly is also inhibited by clusterin (CLU) chaperones that inhibit polymerization of C9. In terms of biological role, component of the membrane attack complex (MAC), a multiprotein complex activated by the complement cascade, which inserts into a target cell membrane and forms a pore, leading to target cell membrane rupture and cell lysis. The MAC is initiated by proteolytic cleavage of C5 into complement C5b in response to the classical, alternative, lectin and GZMK complement pathways. The complement pathways consist in a cascade of proteins that leads to phagocytosis and breakdown of pathogens and signaling that strengthens the adaptive immune system. C8B, together with C8A and C8G, inserts into the target membrane, but does not form pores by itself. During MAC assembly, associates with C5b, C6 and C7 to form the C5b8 intermediate complex that inserts into the target membrane and traverses the bilayer increasing membrane rigidity. This Homo sapiens (Human) protein is Complement component C8 beta chain.